Consider the following 262-residue polypeptide: pFDCC methylesterase MES16 (262 aa).

Ser87 serves as the catalytic Acyl-ester intermediate. Residues Asp211 and His239 each act as charge relay system in the active site.

This sequence belongs to the AB hydrolase superfamily. Methylesterase family.

The protein localises to the cytoplasm. The enzyme catalyses methyl (indol-3-yl)acetate + H2O = (indol-3-yl)acetate + methanol + H(+). It catalyses the reaction methyl (-)-jasmonate + H2O = jasmonate + methanol + H(+). The catalysed reaction is primary fluorescent dioxobilin-type chlorophyll catabolite + H2O = O13(4)-desmethyl pFDCC + methanol + H(+). It functions in the pathway plant hormone biosynthesis. Its pathway is lipid metabolism; oxylipin biosynthesis. The protein operates within porphyrin-containing compound metabolism; chlorophyll degradation. Functionally, involved in the chlorophyll breakdown by its action in fluorescent chlorophyll catabolites (FCCs) demethylation. Demethylates the C13(2)-carboxymethyl group present at the isocyclic ring of chlorophyll. Uses primary fluorescent dioxobilin-type chlorophyll catabolite (pFDCC) as substrate to produce O13(4)-desmethyl pFDCC. Also able to catalyze pheophorbides in vitro. Methylesterase shown to have carboxylesterase activity, methyl indole-3-acetic acid (MeIAA) esterase activity and methyl jasmonate (MeJA) esterase activity in vitro. The sequence is that of pFDCC methylesterase MES16 from Arabidopsis thaliana (Mouse-ear cress).